The chain runs to 293 residues: Ribosomal protein L11 methyltransferase (293 aa).

The S-adenosyl-L-methionine site is built by threonine 144, glycine 165, aspartate 187, and asparagine 228.

Belongs to the methyltransferase superfamily. PrmA family.

Its subcellular location is the cytoplasm. It catalyses the reaction L-lysyl-[protein] + 3 S-adenosyl-L-methionine = N(6),N(6),N(6)-trimethyl-L-lysyl-[protein] + 3 S-adenosyl-L-homocysteine + 3 H(+). Methylates ribosomal protein L11. In Methylococcus capsulatus (strain ATCC 33009 / NCIMB 11132 / Bath), this protein is Ribosomal protein L11 methyltransferase.